A 565-amino-acid chain; its full sequence is Dihydroxy-acid dehydratase (565 aa).

Position 80 (Asp80) interacts with Mg(2+). Cys121 contacts [2Fe-2S] cluster. Mg(2+) is bound by residues Asp122 and Lys123. Lys123 is modified (N6-carboxylysine). Position 194 (Cys194) interacts with [2Fe-2S] cluster. Glu447 provides a ligand contact to Mg(2+). Residue Ser473 is the Proton acceptor of the active site.

This sequence belongs to the IlvD/Edd family. As to quaternary structure, homodimer. The cofactor is [2Fe-2S] cluster. Requires Mg(2+) as cofactor.

The enzyme catalyses (2R)-2,3-dihydroxy-3-methylbutanoate = 3-methyl-2-oxobutanoate + H2O. The catalysed reaction is (2R,3R)-2,3-dihydroxy-3-methylpentanoate = (S)-3-methyl-2-oxopentanoate + H2O. It participates in amino-acid biosynthesis; L-isoleucine biosynthesis; L-isoleucine from 2-oxobutanoate: step 3/4. It functions in the pathway amino-acid biosynthesis; L-valine biosynthesis; L-valine from pyruvate: step 3/4. Functions in the biosynthesis of branched-chain amino acids. Catalyzes the dehydration of (2R,3R)-2,3-dihydroxy-3-methylpentanoate (2,3-dihydroxy-3-methylvalerate) into 2-oxo-3-methylpentanoate (2-oxo-3-methylvalerate) and of (2R)-2,3-dihydroxy-3-methylbutanoate (2,3-dihydroxyisovalerate) into 2-oxo-3-methylbutanoate (2-oxoisovalerate), the penultimate precursor to L-isoleucine and L-valine, respectively. The protein is Dihydroxy-acid dehydratase of Pelodictyon phaeoclathratiforme (strain DSM 5477 / BU-1).